The chain runs to 125 residues: Fluoride-specific ion channel FluC (125 aa).

Helical transmembrane passes span 3-23, 33-53, 65-85, and 99-119; these read FILI…VSKV, IPLG…FVLF, FVLF…TFAY, and LVYF…GMVL. The Na(+) site is built by Gly-75 and Thr-78.

The protein belongs to the fluoride channel Fluc/FEX (TC 1.A.43) family.

Its subcellular location is the cell inner membrane. It catalyses the reaction fluoride(in) = fluoride(out). Na(+) is not transported, but it plays an essential structural role and its presence is essential for fluoride channel function. In terms of biological role, fluoride-specific ion channel. Important for reducing fluoride concentration in the cell, thus reducing its toxicity. This chain is Fluoride-specific ion channel FluC, found in Thermosipho melanesiensis (strain DSM 12029 / CIP 104789 / BI429).